The primary structure comprises 217 residues: MQNTTLHIRHLGQQDYESVWHAMQHYTDTRNNDSPDELWIVEHPPVFTQGQAGKSEHILNPGDIPVIQVDRGGQVTYHGPGQLVVYPLLDIKRSKIGVRQLVTYIEQSIIDMLAKYTINAYAKADAPGVYVDERKVASLGLRIRKGCSFHGLALNVDMDLAPFRRINPCGYAGLEMVQCRELGGPQTVIEAGDQLIITLSQLLGYQHLVHHQGLAAS.

One can recognise a BPL/LPL catalytic domain in the interval 32 to 207; it reads NDSPDELWIV…TLSQLLGYQH (176 aa). Residues 71–78, 138–140, and 151–153 contribute to the substrate site; these read RGGQVTYH, SLG, and GLA. The Acyl-thioester intermediate role is filled by Cys-169.

It belongs to the LipB family.

It is found in the cytoplasm. It carries out the reaction octanoyl-[ACP] + L-lysyl-[protein] = N(6)-octanoyl-L-lysyl-[protein] + holo-[ACP] + H(+). It participates in protein modification; protein lipoylation via endogenous pathway; protein N(6)-(lipoyl)lysine from octanoyl-[acyl-carrier-protein]: step 1/2. Catalyzes the transfer of endogenously produced octanoic acid from octanoyl-acyl-carrier-protein onto the lipoyl domains of lipoate-dependent enzymes. Lipoyl-ACP can also act as a substrate although octanoyl-ACP is likely to be the physiological substrate. This is Octanoyltransferase from Shewanella oneidensis (strain ATCC 700550 / JCM 31522 / CIP 106686 / LMG 19005 / NCIMB 14063 / MR-1).